A 334-amino-acid chain; its full sequence is MKKIRPLTEADVTAESAFFMQRRQVLKALGISAAALSLPSTAQADLLSWFKGNDRPKAPVGKPLEFSQPAAWRSDLALTPEDKVTGYNNFYEFGLDKADPAANAGSLKTEPWTLKISGEVAKPYTLDYDDLTHRFPLEERIYRMRCVEAWSMVVPWIGFPLYKLLTQAQPTSHAKYVAFETLYAPDDMPGQKDRFVGGGLKYPYVEGLRLDEAMHPLTLMTVGVYGKALPPQNGAPIRLIVPWKYGFKGIKSIVSIKLTRERPPTTWNLSAPNEYGFYANVNPHVDHPRWSQATERFIGSGGILDVQRQPTLLFNGYASEVASLYRGLNLRENF.

The tat-type signal signal peptide spans 1–44; it reads MKKIRPLTEADVTAESAFFMQRRQVLKALGISAAALSLPSTAQA. Residues Asn88, 91–92, Cys146, Thr181, Asn233, Arg238, and 249–251 contribute to the Mo-molybdopterin site; these read YE and GIK.

Belongs to the MsrP family. Heterodimer of a catalytic subunit (MsrP) and a heme-binding subunit (MsrQ). The cofactor is Mo-molybdopterin. Predicted to be exported by the Tat system. The position of the signal peptide cleavage has not been experimentally proven.

The protein resides in the periplasm. It catalyses the reaction L-methionyl-[protein] + a quinone + H2O = L-methionyl-(S)-S-oxide-[protein] + a quinol. The catalysed reaction is L-methionyl-[protein] + a quinone + H2O = L-methionyl-(R)-S-oxide-[protein] + a quinol. Part of the MsrPQ system that repairs oxidized periplasmic proteins containing methionine sulfoxide residues (Met-O), using respiratory chain electrons. Thus protects these proteins from oxidative-stress damage caused by reactive species of oxygen and chlorine generated by the host defense mechanisms. MsrPQ is essential for the maintenance of envelope integrity under bleach stress, rescuing a wide series of structurally unrelated periplasmic proteins from methionine oxidation, including the primary periplasmic chaperone SurA and the lipoprotein Pal. The catalytic subunit MsrP is non-stereospecific, being able to reduce both (R-) and (S-) diastereoisomers of methionine sulfoxide. In Salmonella arizonae (strain ATCC BAA-731 / CDC346-86 / RSK2980), this protein is Protein-methionine-sulfoxide reductase catalytic subunit MsrP.